Here is a 210-residue protein sequence, read N- to C-terminus: Ribosomal RNA small subunit methyltransferase G (210 aa).

S-adenosyl-L-methionine is bound by residues glycine 74, phenylalanine 79, 127 to 128 (IE), and arginine 143.

This sequence belongs to the methyltransferase superfamily. RNA methyltransferase RsmG family.

It localises to the cytoplasm. It catalyses the reaction guanosine(527) in 16S rRNA + S-adenosyl-L-methionine = N(7)-methylguanosine(527) in 16S rRNA + S-adenosyl-L-homocysteine. Its function is as follows. Specifically methylates the N7 position of guanine in position 527 of 16S rRNA. The polypeptide is Ribosomal RNA small subunit methyltransferase G (Chelativorans sp. (strain BNC1)).